Consider the following 1804-residue polypeptide: Obscurin-like protein 1 (1804 aa).

Serine 10 is subject to Phosphoserine. 4 Ig-like domains span residues 12–100 (PCFL…AAVT), 128–225 (PKFL…ALLQ), 241–330 (PKPV…QTLS), and 339–425 (PRLR…ANVT). The interaction with TTN stretch occupies residues 17 to 19 (FPR). A disulfide bridge links cysteine 33 with cysteine 84. The segment at 85–94 (RARNAAGEAY) is interaction with TTN. Cysteine 149 and cysteine 209 form a disulfide bridge. Positions 227–249 (HQPRESPPQDPDENPKPVLEPLK) are disordered. Cystine bridges form between cysteine 267/cysteine 319 and cysteine 362/cysteine 412. The 99-residue stretch at 517-615 (PPGPPVMVEM…FNGSAHLVPT (99 aa)) folds into the Fibronectin type-III domain. Ig-like domains are found at residues 720-800 (PQDK…FGVT), 804-891 (PPVH…FTVT), 902-982 (PSSE…FTIT), 986-1075 (PPVR…VTVT), 1078-1165 (PERI…FNVS), 1176-1261 (PEAA…FNVQ), 1266-1442 (PPVK…ARLS), 1536-1621 (PVTI…ARLT), 1625-1694 (REVS…EDTG), and 1702-1798 (PAQS…ADTQ). Intrachain disulfides connect cysteine 738/cysteine 788, cysteine 829/cysteine 879, cysteine 920/cysteine 970, cysteine 1011/cysteine 1061, cysteine 1103/cysteine 1153, cysteine 1195/cysteine 1245, cysteine 1289/cysteine 1430, and cysteine 1558/cysteine 1608.

Component of the 3M complex, composed of core components CUL7, CCDC8 and OBSL1. Interacts with CCDC8. Interacts with CUL7; the interaction is direct. Interacts with FBXW8. Interacts (via N-terminal Ig-like domain) with TTN/titin (via C-terminal Ig-like domain); the interaction is direct.

The protein localises to the cytoplasm. Its subcellular location is the perinuclear region. The protein resides in the golgi apparatus. Its function is as follows. Core component of the 3M complex, a complex required to regulate microtubule dynamics and genome integrity. It is unclear how the 3M complex regulates microtubules, it could act by controlling the level of a microtubule stabilizer. Acts as a regulator of the Cul7-RING(FBXW8) ubiquitin-protein ligase, playing a critical role in the ubiquitin ligase pathway that regulates Golgi morphogenesis and dendrite patterning in brain. Required to localize CUL7 to the Golgi apparatus in neurons. This is Obscurin-like protein 1 (Obsl1) from Mus musculus (Mouse).